The primary structure comprises 124 residues: Small ribosomal subunit protein uS13 (124 aa).

The tract at residues 95-124 (GLPVRGQRTKTNARTRKGPKRTIAGKKKAR) is disordered.

It belongs to the universal ribosomal protein uS13 family. As to quaternary structure, part of the 30S ribosomal subunit. Forms a loose heterodimer with protein S19. Forms two bridges to the 50S subunit in the 70S ribosome.

Its function is as follows. Located at the top of the head of the 30S subunit, it contacts several helices of the 16S rRNA. In the 70S ribosome it contacts the 23S rRNA (bridge B1a) and protein L5 of the 50S subunit (bridge B1b), connecting the 2 subunits; these bridges are implicated in subunit movement. Contacts the tRNAs in the A and P-sites. The chain is Small ribosomal subunit protein uS13 from Mycobacterium sp. (strain JLS).